Consider the following 258-residue polypeptide: UPF0246 protein YaaA (258 aa).

This sequence belongs to the UPF0246 family.

The chain is UPF0246 protein YaaA from Escherichia coli O17:K52:H18 (strain UMN026 / ExPEC).